A 303-amino-acid chain; its full sequence is E3 ubiquitin-protein ligase CHIP (303 aa).

The span at 1-10 shows a compositional bias: basic and acidic residues; sequence MKGKEEKEGG. The tract at residues 1 to 30 is disordered; that stretch reads MKGKEEKEGGARLGAGGGSPEKSPSAQELK. Residue Lys-2 forms a Glycyl lysine isopeptide (Lys-Gly) (interchain with G-Cter in ubiquitin) linkage. Ser-19 carries the post-translational modification Phosphoserine. A Glycyl lysine isopeptide (Lys-Gly) (interchain with G-Cter in ubiquitin) cross-link involves residue Lys-22. Ser-23 and Ser-25 each carry phosphoserine. 3 TPR repeats span residues 26 to 59, 60 to 93, and 95 to 127; these read AQEL…NPLV, AVYY…DGQS, and KAHF…AKEQ. Positions 101–200 are required for interaction with MAPK7; that stretch reads GQCQLEMESY…SHVRAQQACI (100 aa). Positions 142 to 196 are required for interaction with and ubiquitination of MYOCD; that stretch reads AKKKRWNSIEERRIHQESELHSYLSRLIAAERERELEECQRNHEGDEDDSHVRAQ. The interval 143 to 197 is required for interaction with FOXO1; the sequence is KKKRWNSIEERRIHQESELHSYLSRLIAAERERELEECQRNHEGDEDDSHVRAQQ. Residues 143 to 303 form a required for ubiquitination of FOXO1 region; the sequence is KKKRWNSIEE…ISENGWVEDY (161 aa). Ser-149 is modified (phosphoserine). Residues Lys-221 and Lys-255 each participate in a glycyl lysine isopeptide (Lys-Gly) (interchain with G-Cter in ubiquitin) cross-link. The 75-residue stretch at 226–300 folds into the U-box domain; sequence DIPDYLCGKI…DAFISENGWV (75 aa). Ser-273 bears the Phosphoserine mark.

In terms of assembly, homodimer. Interacts with BAG2. Interacts with E2 ubiquitin conjugating enzymes UBE2D1, UBE2D2 and UBE2D3. Detected in a ternary complex containing STUB1, HSPA1A and HSPBP1. Part of a complex composed of STUB1/CHIP, VCP/p97, CHRNA3, and UBXN2A that modulates the ubiquitination and endoplasmic reticulum-associated degradation (ERAD) of CHRNA3. Within the complex UBXN2A acts as a scaffold protein required for the interaction of CHRNA3 with VCP/p97, this interaction also inhibits CHRNA3 ubiquitination by STUB1/CHIP and subsequently ERAD. Interacts with MKKS. Interacts with DNAAF4. Interacts (when monoubiquitinated) with ATXN3. Interacts with UBE2W. Interacts (via the U-box domain) with the UBE2V2-UBE2N heterodimer; the complex has a specific 'Lys-63'-linked polyubiquitination activity. Interacts with DNAJB6. Interacts with FLCN. Interacts with HSP90AA1. Interacts with HSP90. Interacts with UBE2N and UBE2V1. Interacts (via TPR repeats) with HSPA8 (via C-terminus). Interacts (via TPR repeats) with HSPA1A (via C-terminus). Interacts with the non-acetylated form of HSPA1A and HSPA1B. Interacts with SMAD3 and HSP90AB1. Interacts with UBE4B. Interacts with PRMT5. Interacts with MYOCD (via C-terminus). Interacts with FOXO1 (when phosphorylated on 'Ser-256'). Interacts with MAPK7/ERK5; the interaction is enhanced in the presence of IGF1 or MAP2K5 and promotes STUB1/CHIP E3 ligase activity. Interacts with and ubiquitinates ESR1; the interaction is promoted in the absence of estradiol (17-beta-estradiol/E2). Interacts with ESR2. Interacts with and ubiquitinates NFATC3; HSPA1A/HSP70 is required as a co-chaperone. In macrophages, interacts with PAQR3; the interaction promotes PPARG poylubiquitination and STUB1-mediated degradation. Component of the chaperone-assisted selective autophagy (CASA) complex consisting of BAG3, HSPA8/HSC70, HSPB8 and STUB1/CHIP. Monoubiquitinated at Lys-2 following cell stress by UBE2W, promoting the interaction with ATXN3. Auto-ubiquitinated; mediated by UBE2D1 and UBE2D2 and enhanced in the presence of MAP2K5. As to expression, expressed in differentiated myotubes (at protein level). Highly expressed in skeletal muscle, heart, pancreas, brain and placenta. Detected in kidney, liver and lung.

It localises to the cytoplasm. The protein resides in the nucleus. It is found in the mitochondrion. It carries out the reaction S-ubiquitinyl-[E2 ubiquitin-conjugating enzyme]-L-cysteine + [acceptor protein]-L-lysine = [E2 ubiquitin-conjugating enzyme]-L-cysteine + N(6)-ubiquitinyl-[acceptor protein]-L-lysine.. The protein operates within protein modification; protein ubiquitination. E3 ubiquitin-protein ligase which targets misfolded chaperone substrates towards proteasomal degradation. Plays a role in the maintenance of mitochondrial morphology and promotes mitophagic removal of dysfunctional mitochondria; thereby acts as a protector against apoptosis in response to cellular stress. Negatively regulates vascular smooth muscle contraction, via degradation of the transcriptional activator MYOCD and subsequent loss of transcription of genes involved in vascular smooth muscle contraction. Promotes survival and proliferation of cardiac smooth muscle cells via ubiquitination and degradation of FOXO1, resulting in subsequent repression of FOXO1-mediated transcription of pro-apoptotic genes. Ubiquitinates ICER-type isoforms of CREM and targets them for proteasomal degradation, thereby acts as a positive effector of MAPK/ERK-mediated inhibition of apoptosis in cardiomyocytes. Inhibits lipopolysaccharide-induced apoptosis and hypertrophy in cardiomyocytes, via ubiquitination and subsequent proteasomal degradation of NFATC3. Collaborates with ATXN3 in the degradation of misfolded chaperone substrates: ATXN3 restricting the length of ubiquitin chain attached to STUB1/CHIP substrates and preventing further chain extension. Ubiquitinates NOS1 in concert with Hsp70 and Hsp40. Modulates the activity of several chaperone complexes, including Hsp70, Hsc70 and Hsp90. Ubiquitinates CHRNA3 targeting it for endoplasmic reticulum-associated degradation in cortical neurons, as part of the STUB1-VCP-UBXN2A complex. Ubiquitinates and promotes ESR1 proteasomal degradation in response to age-related circulating estradiol (17-beta-estradiol/E2) decline, thereby promotes neuronal apoptosis in response to ischemic reperfusion injury. Mediates transfer of non-canonical short ubiquitin chains to HSPA8 that have no effect on HSPA8 degradation. Mediates polyubiquitination of DNA polymerase beta (POLB) at 'Lys-41', 'Lys-61' and 'Lys-81', thereby playing a role in base-excision repair: catalyzes polyubiquitination by amplifying the HUWE1/ARF-BP1-dependent monoubiquitination and leading to POLB-degradation by the proteasome. Mediates polyubiquitination of CYP3A4. Ubiquitinates EPHA2 and may regulate the receptor stability and activity through proteasomal degradation. Acts as a co-chaperone for HSPA1A and HSPA1B chaperone proteins and promotes ubiquitin-mediated protein degradation. Negatively regulates the suppressive function of regulatory T-cells (Treg) during inflammation by mediating the ubiquitination and degradation of FOXP3 in a HSPA1A/B-dependent manner. Catalyzes monoubiquitination of SIRT6, preventing its degradation by the proteasome. Likely mediates polyubiquitination and down-regulates plasma membrane expression of PD-L1/CD274, an immune inhibitory ligand critical for immune tolerance to self and antitumor immunity. Negatively regulates TGF-beta signaling by modulating the basal level of SMAD3 via ubiquitin-mediated degradation. Plays a role in the degradation of TP53. Mediates ubiquitination of RIPK3 leading to its subsequent proteasome-dependent degradation. May regulate myosin assembly in striated muscles together with UBE4B and VCP/p97 by targeting myosin chaperone UNC45B for proteasomal degradation. Ubiquitinates PPARG in macrophages playing a role in M2 macrophages polarization and angiogenesis. This is E3 ubiquitin-protein ligase CHIP from Homo sapiens (Human).